Reading from the N-terminus, the 212-residue chain is Peptide methionine sulfoxide reductase MsrA (212 aa).

Cys-52 is a catalytic residue.

Belongs to the MsrA Met sulfoxide reductase family.

The catalysed reaction is L-methionyl-[protein] + [thioredoxin]-disulfide + H2O = L-methionyl-(S)-S-oxide-[protein] + [thioredoxin]-dithiol. The enzyme catalyses [thioredoxin]-disulfide + L-methionine + H2O = L-methionine (S)-S-oxide + [thioredoxin]-dithiol. Has an important function as a repair enzyme for proteins that have been inactivated by oxidation. Catalyzes the reversible oxidation-reduction of methionine sulfoxide in proteins to methionine. This chain is Peptide methionine sulfoxide reductase MsrA, found in Salmonella newport (strain SL254).